The following is a 380-amino-acid chain: Oocyte-specific homeobox protein 4 (380 aa).

Disordered regions lie at residues 1-25 (MSKD…SFLV), 43-95 (VTPT…RKCR), 152-182 (KSSQ…FAAS), 234-303 (PRQK…CQTP), and 339-380 (TRSK…SSAY). Positions 43 to 53 (VTPTRPLQSSH) are enriched in polar residues. Positions 54 to 67 (SVHERDLHQKDSQE) are enriched in basic and acidic residues. The homeobox DNA-binding region spans 94–153 (CRKERTVYSKEQKCLLQEHFHQCQNPDLEQRKALALLIGVTEYKIQTWFKNRRAKECRKS). A compositionally biased stretch (basic and acidic residues) spans 234-250 (PRQKCRELSREPGHLSS). Residues 260–271 (SSPSPAAGAESS) show a composition bias toward low complexity. Composition is skewed to polar residues over residues 278–302 (LSLS…MCQT) and 351–380 (NTVQ…SSAY).

This sequence belongs to the paired homeobox family. Obox subfamily. In terms of tissue distribution, specifically expressed in early embryos.

It is found in the nucleus. Functionally, transcription factor required for zygotic genome activation (ZGA), a critical event in early embryonic development during which the developmental control passes from maternally provided mRNAs to the expression of the zygotic genome after fertilization. Cannot compensate for loss of other members of the Obox family, suggesting that its function differs from other Obox family members. May regulate expression of histone genes in embryonic stem cells. Also involved in completion of meiosis of oocytes during the meiosis-I/meiosis-II transition. Required to maintain the nuclear membrane of the germinal vesicle in oocytes. This Mus musculus (Mouse) protein is Oocyte-specific homeobox protein 4.